The following is a 293-amino-acid chain: MNKDLKGLYAALLVPFDENGQVNEQGLKQIAQNTIETEELDGLYVNGSSGENFLLNTEQKKQVFKVAKEAVGDKVKLIAQVGSLDLNEAIELGKYATEIGYDALSAVTPFYYPFTFEEIRDYYFDIIEATQNNMIIYAIPDLTGVNISIEQFSELFNHEKIVGVKYTAPNFFLLERIRKAFPDKLILSGFDEMLVQATISGVDGAIGSTYNVNGRRARKIFDLARQGQIQEAYQLQHDSNDIIETVLSMGIYPTLKEILRHRGIDAGLPKRPFKPFNEAHRQTLDQLIAKYDL.

S48 and S49 together coordinate aceneuramate. Y137 serves as the catalytic Proton donor. K165 serves as the catalytic Schiff-base intermediate with substrate. Aceneuramate is bound by residues T167, G189, D191, E192, and S208.

The protein belongs to the DapA family. NanA subfamily. As to quaternary structure, homotetramer.

It is found in the cytoplasm. It carries out the reaction aceneuramate = aldehydo-N-acetyl-D-mannosamine + pyruvate. It participates in amino-sugar metabolism; N-acetylneuraminate degradation; D-fructose 6-phosphate from N-acetylneuraminate: step 1/5. Its function is as follows. Catalyzes the reversible aldol cleavage of N-acetylneuraminic acid (sialic acid; Neu5Ac) to form pyruvate and N-acetylmannosamine (ManNAc) via a Schiff base intermediate. The chain is N-acetylneuraminate lyase from Staphylococcus aureus (strain bovine RF122 / ET3-1).